Reading from the N-terminus, the 258-residue chain is Proteasome subunit alpha (258 aa).

It belongs to the peptidase T1A family. The 20S proteasome core is composed of 14 alpha and 14 beta subunits that assemble into four stacked heptameric rings, resulting in a barrel-shaped structure. The two inner rings, each composed of seven catalytic beta subunits, are sandwiched by two outer rings, each composed of seven alpha subunits. The catalytic chamber with the active sites is on the inside of the barrel. Has a gated structure, the ends of the cylinder being occluded by the N-termini of the alpha-subunits. Is capped by the proteasome-associated ATPase, ARC.

Its subcellular location is the cytoplasm. Its pathway is protein degradation; proteasomal Pup-dependent pathway. With respect to regulation, the formation of the proteasomal ATPase ARC-20S proteasome complex, likely via the docking of the C-termini of ARC into the intersubunit pockets in the alpha-rings, may trigger opening of the gate for substrate entry. Interconversion between the open-gate and close-gate conformations leads to a dynamic regulation of the 20S proteasome proteolysis activity. Functionally, component of the proteasome core, a large protease complex with broad specificity involved in protein degradation. The chain is Proteasome subunit alpha from Nocardia farcinica (strain IFM 10152).